Here is a 498-residue protein sequence, read N- to C-terminus: Putative BTB/POZ domain-containing protein L67 (498 aa).

In terms of domain architecture, BTB spans 26–96; it reads SDINITLSDN…MYGISLSEIN (71 aa).

Belongs to the mimivirus BTB/WD family.

This is Putative BTB/POZ domain-containing protein L67 from Acanthamoeba polyphaga (Amoeba).